A 298-amino-acid chain; its full sequence is Tyrosine recombinase XerD (298 aa).

One can recognise a Core-binding (CB) domain in the interval Lys2–Tyr87. Positions Arg108–Gln292 constitute a Tyr recombinase domain. Active-site residues include Arg148, Lys172, His244, Arg247, and His270. The active-site O-(3'-phospho-DNA)-tyrosine intermediate is Tyr279.

This sequence belongs to the 'phage' integrase family. XerD subfamily. In terms of assembly, forms a cyclic heterotetrameric complex composed of two molecules of XerC and two molecules of XerD, in which XerC interacts with XerD via its C-terminal region, XerD interacts with XerC via its C-terminal region and so on.

Its subcellular location is the cytoplasm. Its activity is regulated as follows. FtsK may regulate the catalytic switch between XerC and XerD in the heterotetrameric complex during the two steps of the recombination process. Functionally, site-specific tyrosine recombinase, which acts by catalyzing the cutting and rejoining of the recombining DNA molecules. Binds cooperatively to specific DNA consensus sequences that are separated from XerC binding sites by a short central region, forming the heterotetrameric XerC-XerD complex that recombines DNA substrates. The complex is essential to convert dimers of the bacterial chromosome into monomers to permit their segregation at cell division. It also contributes to the segregational stability of plasmids. In the complex XerD specifically exchanges the bottom DNA strands. The polypeptide is Tyrosine recombinase XerD (Escherichia coli O157:H7).